Here is a 155-residue protein sequence, read N- to C-terminus: Ribosomal RNA large subunit methyltransferase H (155 aa).

S-adenosyl-L-methionine contacts are provided by residues L73, G104, and 123–128; that span reads LSPLTL.

Belongs to the RNA methyltransferase RlmH family. As to quaternary structure, homodimer.

Its subcellular location is the cytoplasm. The catalysed reaction is pseudouridine(1915) in 23S rRNA + S-adenosyl-L-methionine = N(3)-methylpseudouridine(1915) in 23S rRNA + S-adenosyl-L-homocysteine + H(+). In terms of biological role, specifically methylates the pseudouridine at position 1915 (m3Psi1915) in 23S rRNA. In Pseudomonas putida (strain W619), this protein is Ribosomal RNA large subunit methyltransferase H.